Consider the following 484-residue polypeptide: Glutamyl-tRNA(Gln) amidotransferase subunit A (484 aa).

Active-site charge relay system residues include lysine 77 and serine 152. Residue serine 176 is the Acyl-ester intermediate of the active site.

Belongs to the amidase family. GatA subfamily. Heterotrimer of A, B and C subunits.

The enzyme catalyses L-glutamyl-tRNA(Gln) + L-glutamine + ATP + H2O = L-glutaminyl-tRNA(Gln) + L-glutamate + ADP + phosphate + H(+). Its function is as follows. Allows the formation of correctly charged Gln-tRNA(Gln) through the transamidation of misacylated Glu-tRNA(Gln) in organisms which lack glutaminyl-tRNA synthetase. The reaction takes place in the presence of glutamine and ATP through an activated gamma-phospho-Glu-tRNA(Gln). In Lacticaseibacillus paracasei (strain ATCC 334 / BCRC 17002 / CCUG 31169 / CIP 107868 / KCTC 3260 / NRRL B-441) (Lactobacillus paracasei), this protein is Glutamyl-tRNA(Gln) amidotransferase subunit A.